We begin with the raw amino-acid sequence, 239 residues long: MNPEIFAKELAKYGFELNEKQKKQFATYYDKLVEFNKKVNLTRITDKNEVYLKHFFDSITPLLEFPDLFKGEKTLCDVGAGAGFPSLPIKILCPNLSITIVDSLGKRLKFLDELVNDLGLDKVTLVHSRAEDAGQNKDLREKFDLVTGRAVARMSVLSEYCLPLAKVGGYLVALKGPKAQDELAEAKHAIDVLGGKVEDVKELTLPDTDDDRTLIVVEKIKATPKKYPRQAGTPNKKPL.

S-adenosyl-L-methionine contacts are provided by residues Gly79, Phe84, 130 to 131, and Arg149; that span reads AE.

This sequence belongs to the methyltransferase superfamily. RNA methyltransferase RsmG family.

It is found in the cytoplasm. Its function is as follows. Specifically methylates the N7 position of a guanine in 16S rRNA. This is Ribosomal RNA small subunit methyltransferase G from Lactobacillus johnsonii (strain CNCM I-12250 / La1 / NCC 533).